Consider the following 192-residue polypeptide: GTP cyclohydrolase-2 (192 aa).

Residue 50-54 (RLHSE) participates in GTP binding. Residues C55, C66, and C68 each contribute to the Zn(2+) site. GTP-binding positions include 92 to 94 (EGR) and T114. The active-site Proton acceptor is D126. The Nucleophile role is filled by R128. The GTP site is built by T149 and K154.

This sequence belongs to the GTP cyclohydrolase II family. Zn(2+) serves as cofactor.

The catalysed reaction is GTP + 4 H2O = 2,5-diamino-6-hydroxy-4-(5-phosphoribosylamino)-pyrimidine + formate + 2 phosphate + 3 H(+). It functions in the pathway cofactor biosynthesis; riboflavin biosynthesis; 5-amino-6-(D-ribitylamino)uracil from GTP: step 1/4. Functionally, catalyzes the conversion of GTP to 2,5-diamino-6-ribosylamino-4(3H)-pyrimidinone 5'-phosphate (DARP), formate and pyrophosphate. This is GTP cyclohydrolase-2 from Helicobacter pylori (strain J99 / ATCC 700824) (Campylobacter pylori J99).